Here is a 226-residue protein sequence, read N- to C-terminus: PKHD-type hydroxylase HNE_2117 (226 aa).

The Fe2OG dioxygenase domain occupies 78–178 (TVLTPRFNRY…RLASFLWTQS (101 aa)). Fe cation contacts are provided by His-96, Asp-98, and His-159. Arg-169 serves as a coordination point for 2-oxoglutarate.

The cofactor is Fe(2+). L-ascorbate serves as cofactor.

The sequence is that of PKHD-type hydroxylase HNE_2117 from Hyphomonas neptunium (strain ATCC 15444).